The primary structure comprises 317 residues: Protoheme IX farnesyltransferase (317 aa).

The next 9 helical transmembrane spans lie at 36–56 (VMVL…ATVN), 57–77 (PVIA…SGCL), 108–128 (LAFG…ASNW), 129–149 (LAAG…SMWL), 157–177 (IVIG…AVTG), 184–204 (LVLF…LALV), 230–247 (IIWY…PVWL), 251–273 (GWLY…VQVY), and 284–304 (AAMG…SALL).

Belongs to the UbiA prenyltransferase family. Protoheme IX farnesyltransferase subfamily.

The protein resides in the cell inner membrane. The catalysed reaction is heme b + (2E,6E)-farnesyl diphosphate + H2O = Fe(II)-heme o + diphosphate. The protein operates within porphyrin-containing compound metabolism; heme O biosynthesis; heme O from protoheme: step 1/1. Its function is as follows. Converts heme B (protoheme IX) to heme O by substitution of the vinyl group on carbon 2 of heme B porphyrin ring with a hydroxyethyl farnesyl side group. This chain is Protoheme IX farnesyltransferase, found in Methylorubrum extorquens (strain CM4 / NCIMB 13688) (Methylobacterium extorquens).